Here is a 350-residue protein sequence, read N- to C-terminus: Lipoyl synthase (350 aa).

Residues Met1–Val39 are disordered. Residues Cys73, Cys78, Cys84, Cys99, Cys103, Cys106, and Ser314 each contribute to the [4Fe-4S] cluster site. Residues Trp85–Met303 form the Radical SAM core domain.

Belongs to the radical SAM superfamily. Lipoyl synthase family. Requires [4Fe-4S] cluster as cofactor.

The protein localises to the cytoplasm. The enzyme catalyses [[Fe-S] cluster scaffold protein carrying a second [4Fe-4S](2+) cluster] + N(6)-octanoyl-L-lysyl-[protein] + 2 oxidized [2Fe-2S]-[ferredoxin] + 2 S-adenosyl-L-methionine + 4 H(+) = [[Fe-S] cluster scaffold protein] + N(6)-[(R)-dihydrolipoyl]-L-lysyl-[protein] + 4 Fe(3+) + 2 hydrogen sulfide + 2 5'-deoxyadenosine + 2 L-methionine + 2 reduced [2Fe-2S]-[ferredoxin]. The protein operates within protein modification; protein lipoylation via endogenous pathway; protein N(6)-(lipoyl)lysine from octanoyl-[acyl-carrier-protein]: step 2/2. Functionally, catalyzes the radical-mediated insertion of two sulfur atoms into the C-6 and C-8 positions of the octanoyl moiety bound to the lipoyl domains of lipoate-dependent enzymes, thereby converting the octanoylated domains into lipoylated derivatives. In Ectopseudomonas mendocina (strain ymp) (Pseudomonas mendocina), this protein is Lipoyl synthase.